The primary structure comprises 577 residues: Myb-like protein N (577 aa).

Disordered regions lie at residues 1–23 (MMTI…NIYT), 206–225 (TPFS…SPLN), and 240–264 (SSSS…LSSS). Low complexity predominate over residues 213-225 (PNSPNSTSSSPLN). HTH myb-type domains lie at 403-465 (KKST…CPAI) and 466-517 (RKGS…SREV). 2 DNA-binding regions (H-T-H motif) span residues 437–461 (WKKI…KRVL) and 489–513 (WKNV…KSCM). The Myb-like domain maps to 518–570 (PWTPKEDEILQKKVIENKQDSTKEIGWMDLSKAMARARQTKIPRTALECKIRF).

The protein localises to the nucleus. In Dictyostelium discoideum (Social amoeba), this protein is Myb-like protein N (mybN).